A 492-amino-acid chain; its full sequence is 2-succinylbenzoate--CoA ligase (492 aa).

This sequence belongs to the ATP-dependent AMP-binding enzyme family. MenE subfamily.

The enzyme catalyses 2-succinylbenzoate + ATP + CoA = 2-succinylbenzoyl-CoA + AMP + diphosphate. It functions in the pathway quinol/quinone metabolism; 1,4-dihydroxy-2-naphthoate biosynthesis; 1,4-dihydroxy-2-naphthoate from chorismate: step 5/7. Its pathway is quinol/quinone metabolism; menaquinone biosynthesis. Converts 2-succinylbenzoate (OSB) to 2-succinylbenzoyl-CoA (OSB-CoA). This is 2-succinylbenzoate--CoA ligase from Geobacillus sp. (strain WCH70).